Consider the following 289-residue polypeptide: Homoserine kinase (289 aa).

79–89 (PLARGLGSSSS) lines the ATP pocket.

Belongs to the GHMP kinase family. Homoserine kinase subfamily.

The protein resides in the cytoplasm. The enzyme catalyses L-homoserine + ATP = O-phospho-L-homoserine + ADP + H(+). It functions in the pathway amino-acid biosynthesis; L-threonine biosynthesis; L-threonine from L-aspartate: step 4/5. Catalyzes the ATP-dependent phosphorylation of L-homoserine to L-homoserine phosphate. The protein is Homoserine kinase of Streptococcus pneumoniae (strain Taiwan19F-14).